We begin with the raw amino-acid sequence, 360 residues long: MLDIHNPATDHHDMRDLTIIGGGPTGIFAAFQCGMNNISCRIIESMPQLGGQLAALYPEKHIYDVAGFPEVPAIDLVESLWAQAERYNPDVVLNETVTKYTKLDDGTFETRTNTGNVYRSRAVLIAAGLGAFEPRKLPQLGNIDHLTGSSVYYAVKSVEDFKGKRVVIVGGGDSALDWTVGLIKNAASVTLVHRGHEFQGHGKTAHEVERARANGTIDVYLETEVASIEESNGVLTRVHLRSSDGSKWTVEADRLLILIGFKSNLGPLARWDLELYENALVVDSHMKTSVDGLYAAGDIAYYPGKLKIIQTGLSEATMAVRHSLSYIKPGEKIRNVFSSVKMAKEKKAAEAGNATENKAE.

T25, E44, Q52, Y57, V97, F132, D298, and S339 together coordinate FAD.

This sequence belongs to the ferredoxin--NADP reductase type 2 family. As to quaternary structure, homodimer. FAD is required as a cofactor.

It carries out the reaction 2 reduced [2Fe-2S]-[ferredoxin] + NADP(+) + H(+) = 2 oxidized [2Fe-2S]-[ferredoxin] + NADPH. In Chlorobaculum tepidum (strain ATCC 49652 / DSM 12025 / NBRC 103806 / TLS) (Chlorobium tepidum), this protein is Ferredoxin--NADP reductase.